The primary structure comprises 99 residues: Small ribosomal subunit protein eS24 (99 aa).

The protein belongs to the eukaryotic ribosomal protein eS24 family.

In Methanothrix thermoacetophila (strain DSM 6194 / JCM 14653 / NBRC 101360 / PT) (Methanosaeta thermophila), this protein is Small ribosomal subunit protein eS24.